The sequence spans 169 residues: Spore protein SP21 (169 aa).

Disordered regions lie at residues 1 to 21 (MADLSVRRGTGSTPQRTREWD) and 150 to 169 (QPKRIQVASSGTEQKEHIKA). The region spanning 47-159 (QGPPAFVPAF…QPKRIQVASS (113 aa)) is the sHSP domain.

This sequence belongs to the small heat shock protein (HSP20) family.

In terms of biological role, may stabilize cellular components during stress and spore formation. This Stigmatella aurantiaca (strain DW4/3-1) protein is Spore protein SP21 (hspA).